The chain runs to 309 residues: Acetylglutamate kinase (309 aa).

Residues 82-83 (GG), Arg-104, and Asn-206 each bind substrate.

The protein belongs to the acetylglutamate kinase family. ArgB subfamily.

The protein localises to the cytoplasm. The enzyme catalyses N-acetyl-L-glutamate + ATP = N-acetyl-L-glutamyl 5-phosphate + ADP. It participates in amino-acid biosynthesis; L-arginine biosynthesis; N(2)-acetyl-L-ornithine from L-glutamate: step 2/4. Catalyzes the ATP-dependent phosphorylation of N-acetyl-L-glutamate. The polypeptide is Acetylglutamate kinase (Cupriavidus pinatubonensis (strain JMP 134 / LMG 1197) (Cupriavidus necator (strain JMP 134))).